Consider the following 701-residue polypeptide: Polyribonucleotide nucleotidyltransferase (701 aa).

The Mg(2+) site is built by Asp-487 and Asp-493. Positions 554 to 613 (PTMLQMKIDSDKIRDVIGKGGATIRAICEETKASIDIEDDGSVKIYGETKEAAEAAKQRV) constitute a KH domain. The S1 motif domain occupies 623–691 (GKIYVGKVER…NRGRIKLSIK (69 aa)).

Belongs to the polyribonucleotide nucleotidyltransferase family. Component of the RNA degradosome, which is a multiprotein complex involved in RNA processing and mRNA degradation. It depends on Mg(2+) as a cofactor.

It localises to the cytoplasm. It catalyses the reaction RNA(n+1) + phosphate = RNA(n) + a ribonucleoside 5'-diphosphate. In terms of biological role, involved in mRNA degradation. Catalyzes the phosphorolysis of single-stranded polyribonucleotides processively in the 3'- to 5'-direction. This is Polyribonucleotide nucleotidyltransferase from Pseudomonas paraeruginosa (strain DSM 24068 / PA7) (Pseudomonas aeruginosa (strain PA7)).